Here is a 328-residue protein sequence, read N- to C-terminus: MTDTPKPPRKKPQRPAKPAAPREKATLHPRNRHQGHYDFPKLIKSSPELAAFVILNPYGKESIDFANPQAVRVFNRALLKAFYGIAHWDIPADYLCPPIPGRADYLHFLADVLAEDHEGVIPRGASVKALDIGTGANCIYPLLGHSDYGWQFVGSDIDSTAVAAATAIVKANGLHKAISVRLQGNRKQILLGLCDSNERFDVSLCNPPFHASLDEAQRGSQRKWRALGKADPKRKLPVLNFGGQSQELWCEGGEIGFVTQLIQESARLPGLVVWFSTLVSKASNLPPIQSALKKAGALEVKVVEMGQGQKQSRFVAWTFLDKAQRTPG.

Positions 1–38 (MTDTPKPPRKKPQRPAKPAAPREKATLHPRNRHQGHYD) are disordered.

Belongs to the methyltransferase superfamily. METTL16/RlmF family.

The protein localises to the cytoplasm. It carries out the reaction adenosine(1618) in 23S rRNA + S-adenosyl-L-methionine = N(6)-methyladenosine(1618) in 23S rRNA + S-adenosyl-L-homocysteine + H(+). Functionally, specifically methylates the adenine in position 1618 of 23S rRNA. This Pseudomonas syringae pv. tomato (strain ATCC BAA-871 / DC3000) protein is Ribosomal RNA large subunit methyltransferase F.